A 59-amino-acid chain; its full sequence is MKVSVDKDACIGCGVCASICPDVFEMDDDGKAKALVAETDLECAKEAAESCPTGAITVE.

Residues 2–29 (KVSVDKDACIGCGVCASICPDVFEMDDD) enclose the 4Fe-4S ferredoxin-type domain. Residues C10, C13, and C16 each coordinate [4Fe-4S] cluster. A disulfide bridge connects residues C20 and C43. Position 51 (C51) interacts with [4Fe-4S] cluster.

The cofactor is [4Fe-4S] cluster. [3Fe-4S] cluster is required as a cofactor.

Functionally, ferredoxins are iron-sulfur proteins that transfer electrons in a wide variety of metabolic reactions. This chain is Ferredoxin, found in Thermococcus litoralis.